We begin with the raw amino-acid sequence, 88 residues long: Sigma-conotoxin GVIIIA (88 aa).

The signal sequence occupies residues 1-20 (MMSKMGAMFVLLLLFTLASS). Residues 21–46 (LQEGDVQARKTRLKSDFYRALARDDR) constitute a propeptide that is removed on maturation. Pro-55 carries the post-translational modification 4-hydroxyproline. Trp-80 bears the 6'-bromotryptophan mark. Ser-87 carries the serine amide modification.

Belongs to the conotoxin S superfamily. Contains 5 disulfide bonds. As to expression, expressed by the venom duct.

The protein resides in the secreted. Sigma-conotoxins bind and inhibit serotonin-gated ion channels. This peptide selectively and reversibly inhibits 5-hydroxytryptamine 3 receptor (HTR3A) through competitive antagonism (IC(50)=53-86.8 nM). In Conus geographus (Geography cone), this protein is Sigma-conotoxin GVIIIA.